We begin with the raw amino-acid sequence, 982 residues long: Envelope glycoprotein gp130 (982 aa).

The interval 1–15 (MAPPMNLQQWLLWKK) is involved in virion budding. The Cytoplasmic segment spans residues 1-65 (MAPPMNLQQW…YLAYACCATS (65 aa)). Residues lysine 14, lysine 15, and lysine 34 each participate in a glycyl lysine isopeptide (Lys-Gly) (interchain with G-Cter in ubiquitin) cross-link. A helical; Signal-anchor for type III membrane protein membrane pass occupies residues 66–88 (TRVMCWLFLICVLLIIVFVSCFV). Topologically, residues 89–954 (TVARIQWNRD…TVSILSYAKP (866 aa)) are lumenal. Residues asparagine 109, asparagine 141, asparagine 183, asparagine 309, asparagine 346, asparagine 390, asparagine 404, asparagine 412, asparagine 484, asparagine 522, and asparagine 551 are each glycosylated (N-linked (GlcNAc...) asparagine; by host). The segment at 570–592 (NIEKLRSMGYSLTGAVQTLSQIS) is fusion peptide. N-linked (GlcNAc...) asparagine; by host glycosylation is found at asparagine 776, asparagine 802, and asparagine 827. The chain crosses the membrane as a helical span at residues 955-975 (ILIGIGVILLIAFLFKIVSWL). At 976–982 (PGKKKRN) the chain is on the cytoplasmic side. An Endoplasmic reticulum retention signal motif is present at residues 978 to 980 (KKK).

The mature envelope protein consists of a trimer of SU-TM heterodimers. The N-terminus of leader peptide specifically interacts with Gag protein. This specific interaction between Gag protein and Env glycoprotein may allow particle egress. Envelope glycoproteins are synthesized as an inactive precursor that is processed by host furin or a furin-like protease to yield a functional hetero-oligomeric complex. In terms of processing, the transmembrane protein and the surface protein are N-glycosylated. Post-translationally, mono- and polyubiquitinated leader peptide are found in viral particles. Ubiquitination may be involved in regulating the balance between viral and subviral particles release.

It localises to the host endoplasmic reticulum membrane. The protein resides in the virion membrane. The surface protein (SU) attaches the virus to the host cell by binding to the cell receptor. This interaction triggers the refolding of TM and is thought to activate its fusogenic potential by unmasking its fusion peptide. In terms of biological role, the transmembrane protein (TM) acts as a class I viral fusion protein. Under the current model, the protein has at least 3 conformational states: pre-fusion native state, pre-hairpin intermediate state, and post-fusion hairpin state. During viral and target cell membrane fusion, the coiled coil regions (heptad repeats) assume a trimer-of-hairpins structure, positioning the fusion peptide in close proximity to the C-terminal region of the ectodomain. The formation of this structure appears to drive apposition and subsequent fusion of viral and target cell membranes. Membranes fusion leads to delivery of the nucleocapsid into the cytoplasm. Functionally, the leader peptide is a component of released, infectious virions and is required for particle budding. The chain is Envelope glycoprotein gp130 (env) from Simian foamy virus type 3 (strain LK3) (SFVagm).